A 279-amino-acid polypeptide reads, in one-letter code: Large ribosomal subunit protein uL2 (279 aa).

Disordered regions lie at residues Leu-34–Gly-55 and Arg-221–Lys-279. The segment covering Ser-40–Gly-55 has biased composition (basic residues). Gly residues predominate over residues Met-232 to Gly-242. Residues Leu-259–Lys-279 show a composition bias toward basic residues.

The protein belongs to the universal ribosomal protein uL2 family. As to quaternary structure, part of the 50S ribosomal subunit. Forms a bridge to the 30S subunit in the 70S ribosome.

In terms of biological role, one of the primary rRNA binding proteins. Required for association of the 30S and 50S subunits to form the 70S ribosome, for tRNA binding and peptide bond formation. It has been suggested to have peptidyltransferase activity; this is somewhat controversial. Makes several contacts with the 16S rRNA in the 70S ribosome. This is Large ribosomal subunit protein uL2 from Chlorobium phaeobacteroides (strain BS1).